Reading from the N-terminus, the 652-residue chain is Phosphomethylpyrimidine synthase (652 aa).

Disordered stretches follow at residues 1-45 (MVSR…SVSA) and 118-166 (QRGD…LDGR). A compositionally biased stretch (low complexity) spans 8–45 (SSSSTSKAVTSSPSTSSLSSAASSPSVSSSSSSSSVSA). Residues 134 to 162 (GASGPGTLGSGTPGSGTPGSGPLGLGGTD) show a composition bias toward gly residues. Substrate is bound by residues N245, M274, Y303, H339, 359 to 361 (SRG), 400 to 403 (DGLR), and E439. H443 serves as a coordination point for Zn(2+). Y466 contributes to the substrate binding site. Position 507 (H507) interacts with Zn(2+). 3 residues coordinate [4Fe-4S] cluster: C587, C590, and C595.

This sequence belongs to the ThiC family. It depends on [4Fe-4S] cluster as a cofactor.

It carries out the reaction 5-amino-1-(5-phospho-beta-D-ribosyl)imidazole + S-adenosyl-L-methionine = 4-amino-2-methyl-5-(phosphooxymethyl)pyrimidine + CO + 5'-deoxyadenosine + formate + L-methionine + 3 H(+). The protein operates within cofactor biosynthesis; thiamine diphosphate biosynthesis. Functionally, catalyzes the synthesis of the hydroxymethylpyrimidine phosphate (HMP-P) moiety of thiamine from aminoimidazole ribotide (AIR) in a radical S-adenosyl-L-methionine (SAM)-dependent reaction. This is Phosphomethylpyrimidine synthase from Frankia casuarinae (strain DSM 45818 / CECT 9043 / HFP020203 / CcI3).